Here is a 993-residue protein sequence, read N- to C-terminus: Serine/threonine-protein phosphatase 6 regulatory ankyrin repeat subunit B (993 aa).

ANK repeat units follow at residues 7–36 (TDQP…DVNT), 40–69 (EKRT…RVNA), 73–102 (MWLT…DVNA), 106–135 (NWQT…SVNV), 139–168 (GGRT…NINA), 172–201 (KDRR…EVTC), 205–234 (KGYT…EIDE), 238–267 (YGNT…NVNQ), 271–301 (NGFT…DVNI), 305–334 (DGKS…EIDC), 338–367 (DGNT…DTAK), 371–400 (HSMF…EIDT), 404–433 (FGRT…DFHK), 437–466 (CGRT…NVNE), 470–498 (WGRT…DNSE), 531–561 (EGYN…GFEE), 566–595 (ATKS…DLDI), 599–628 (KGRT…SIFV), 633–662 (TKRT…NPEA), 669–698 (KGQT…NVDT), 702–731 (LGCT…SILC), 735–764 (RGRT…SEED), 771–800 (QGYT…FRKF), 803–832 (NPFT…SSIV), 838–867 (KGRT…PVNA), 871–901 (SGKT…DLTV), 905–934 (DLNT…DESL), and 941–970 (ALQT…CVLA).

Protein phosphatase 6 (PP6) holoenzyme is proposed to be a heterotrimeric complex formed by the catalytic subunit, a SAPS domain-containing subunit (PP6R) and an ankyrin repeat-domain containing regulatory subunit (ARS). Interacts with PPP6R1.

Putative regulatory subunit of protein phosphatase 6 (PP6) that may be involved in the recognition of phosphoprotein substrates. The protein is Serine/threonine-protein phosphatase 6 regulatory ankyrin repeat subunit B (ANKRD44) of Homo sapiens (Human).